The sequence spans 544 residues: Chaperonin GroEL 1 (544 aa).

Residues 29-32 (TLGP), 86-90 (DGTTT), G413, 482-484 (NVL), and D498 contribute to the ATP site.

It belongs to the chaperonin (HSP60) family. In terms of assembly, forms a cylinder of 14 subunits composed of two heptameric rings stacked back-to-back. Interacts with the co-chaperonin GroES.

It localises to the cytoplasm. The enzyme catalyses ATP + H2O + a folded polypeptide = ADP + phosphate + an unfolded polypeptide.. Its function is as follows. Together with its co-chaperonin GroES, plays an essential role in assisting protein folding. The GroEL-GroES system forms a nano-cage that allows encapsulation of the non-native substrate proteins and provides a physical environment optimized to promote and accelerate protein folding. The protein is Chaperonin GroEL 1 of Chloroflexus aurantiacus (strain ATCC 29366 / DSM 635 / J-10-fl).